The following is a 252-amino-acid chain: MARMGGKKHLKALVAPKFWPILRKEYKWAVKPSPGPHPIERCFPLLIIVRDILGYAKTAREARKLISEGHFKVDGRVRKNYKYPVGLMDVIEIVDTGETYRVIPVPVKVLGLIEIDKEEAKYKLSRIENKTTVKGGHIQLNLHDGRNVLIKVSDPKNPVEDIYKTLGTLQISIPEQQILNYIPLDEGTLVIISGGRNVGRVGKVVSIHKGIRRHRSIVTIEDKHGNKFQTSLTYVFPIGKEEPLIKLPEGAW.

Positions 43 to 105 (FPLLIIVRDI…TGETYRVIPV (63 aa)) constitute an S4 RNA-binding domain.

Belongs to the eukaryotic ribosomal protein eS4 family.

The chain is Small ribosomal subunit protein eS4 from Staphylothermus marinus (strain ATCC 43588 / DSM 3639 / JCM 9404 / F1).